Consider the following 389-residue polypeptide: Dihydroorotase (389 aa).

Zn(2+) contacts are provided by H51 and H53. Substrate-binding positions include 53–55 (HVR) and N85. Positions 133, 158, 193, and 256 each coordinate Zn(2+). K133 is modified (N6-carboxylysine). The active site involves D256. Substrate is bound by residues H260 and 274–275 (PG).

The protein belongs to the metallo-dependent hydrolases superfamily. DHOase family. Class I DHOase subfamily. Zn(2+) is required as a cofactor.

It carries out the reaction (S)-dihydroorotate + H2O = N-carbamoyl-L-aspartate + H(+). Its pathway is pyrimidine metabolism; UMP biosynthesis via de novo pathway; (S)-dihydroorotate from bicarbonate: step 3/3. Its function is as follows. Catalyzes the reversible cyclization of carbamoyl aspartate to dihydroorotate. In Sulfolobus acidocaldarius (strain ATCC 33909 / DSM 639 / JCM 8929 / NBRC 15157 / NCIMB 11770), this protein is Dihydroorotase.